A 1196-amino-acid chain; its full sequence is MPGKLVGSSEEAARTGTQANAHAEDHSDLEHSAPSTDDGFDEPKPPIAKSVPPSTAIPKKNNFKHRGDTKNVKPPTLEEMKELRDTQNLFHSNLFKLQVKEMLEELQLKQKYTDFIENWLESFTVFTRQLKDGLMERTHLEVPMKLSEKPTGFVFSKPTREPYLIGAAATGTLLGPKIVVDVALEMPKESLHKEDYLNLRYDQKRALYLTYVTERMMESQNYAQDQFNFNYYANNPLKPVLELIPVTKQVNKHLQVRLFITAPLSSFKPGRFVPWNNNIRPSFYGDEWDEQDPLPSTQHYNANVLFDLTLSENQAQLDKAFKSRRNFQDGLLLLKVWLRQRQLDIGYSGFGAHILAAFIVYLNKQRILHQSSSSYQVARTVWNQLANTDWTKGISLAVDPIQTEELNKFAKHYDVCFIDFTGQHNLCANIPLYLYQRVREEAKLAVELLNDMKLNSFPLIFMQKCPLYSRVDNILKISNYSCINQMLTLHSQPRIKYDFANYGYPQLLHLLTELLKKGLAERVHSILPLETATAAWPVENKAPVIGKYIQLGLILQPEHAYEVLNKGPAANDDPAGAEEFRRFWGEKSNLRRFQDGSITEAVVWGTAQDSPAKKRLIVRHIVLHLLEHHLQLDSKEVQYIGGELDQVYKLSPWFKVNKLKTKLSLDQDTDAEALSPHVIRCYDELARQLHGLNDLPLEIVSISGVSPIFRYCEPQPVLPQALLVENRILASTIQRVVIQLGQSGKWPTELSALRALKTAFLIEIGEKLEAQCRLHWVISADGLLVLKQGYCFLIELAHNKELALLKQEVTERGITTYVDNAASRFLERQHYILPKVSGALHSLHQTYSAFGSTVLLAKRWLATQLLDDGLWPDMATELLVAHLFQQRYAPQSIAAPQTGFIRFLQLLSHSDFNGELFLLNFNNSWQEQQIADLEHNYRSNRQSYPPLAVATSYDMQHAGRLWTSDQSPSQRVLGHVTRLARRALEIIETSLMSKDLRFVRPAQLFRASNEGYDLVIQFKPDLVPNSLSYDLGSPFVSFSQPNFSLPRAGSDYIARIVGLLRSAYSDFAAFFYNPHGGKELAIVWRPTTEFAAKPFKVTELQACSPSGNGKVQVLKETLLEDFKLLLKDFYLRIATPEELKREQREHQKPMRYFEANQAVAESKPKPKKHGKRKGTGKAAPPKKKRLIKSSTLKALK.

Disordered stretches follow at residues 1 to 74 (MPGK…NVKP) and 1140 to 1196 (KREQ…KALK). Basic and acidic residues-rich tracts occupy residues 22-31 (HAEDHSDLEH) and 65-74 (HRGDTKNVKP). Residues 1165–1187 (KPKKHGKRKGTGKAAPPKKKRLI) are compositionally biased toward basic residues.

This sequence belongs to the NRAP family. As to quaternary structure, part of the small subunit (SSU) processome, composed of more than 70 proteins and the RNA chaperone small nucleolar RNA (snoRNA) U3.

The protein resides in the nucleus. It is found in the nucleolus. The protein localises to the chromosome. Functionally, part of the small subunit (SSU) processome, first precursor of the small eukaryotic ribosomal subunit. During the assembly of the SSU processome in the nucleolus, many ribosome biogenesis factors, an RNA chaperone and ribosomal proteins associate with the nascent pre-rRNA and work in concert to generate RNA folding, modifications, rearrangements and cleavage as well as targeted degradation of pre-ribosomal RNA by the RNA exosome. The protein is Nucleolar protein 6 of Drosophila simulans (Fruit fly).